The primary structure comprises 323 residues: MRKYFKERDVPFIIFLMGPTASGKTSVVIELKKQKLGIKIISVDSALVYKNMNIGTAKPSVDELEIAPHQLIDIRDPADCYSVSDFYHDAILEINKIIRSGYVPVLVGGTMLYFKTLLTGLYQLPGKSQNIRNDLIYEAQKIGWVNMYNKLKCIDPIVSKTIHCNDHKRIIRALEVFLSSGKTLTELKQKFLNQQSQRYKVLQFALMPSKREFLYNRIEQRFYKMLKSGFEDEVRLLFSRPDLHDGYQSSISCVGYRQMWEYLSGNVEYDQMIYKGIYATRRLVKNQLTWLKKWPNVHWLNGDNVLIAVNDMLSVLSKYSCVI.

ATP is bound at residue 18 to 25; it reads GPTASGKT. 20–25 contributes to the substrate binding site; it reads TASGKT. Residues 44–47 are interaction with substrate tRNA; it reads DSAL.

This sequence belongs to the IPP transferase family. In terms of assembly, monomer. Mg(2+) is required as a cofactor.

It catalyses the reaction adenosine(37) in tRNA + dimethylallyl diphosphate = N(6)-dimethylallyladenosine(37) in tRNA + diphosphate. Catalyzes the transfer of a dimethylallyl group onto the adenine at position 37 in tRNAs that read codons beginning with uridine, leading to the formation of N6-(dimethylallyl)adenosine (i(6)A). This chain is tRNA dimethylallyltransferase, found in Blochmanniella floridana.